The following is a 400-amino-acid chain: NADH-ubiquinone oxidoreductase 49 kDa subunit (400 aa).

This sequence belongs to the complex I 49 kDa subunit family.

Its subcellular location is the mitochondrion. It carries out the reaction a ubiquinone + NADH + 5 H(+)(in) = a ubiquinol + NAD(+) + 4 H(+)(out). Functionally, core subunit of the mitochondrial membrane respiratory chain NADH dehydrogenase (Complex I) that is believed to belong to the minimal assembly required for catalysis. Complex I functions in the transfer of electrons from NADH to the respiratory chain. The immediate electron acceptor for the enzyme is believed to be ubiquinone. Component of the iron-sulfur (IP) fragment of the enzyme. Component of the iron-sulfur (IP) fragment of the enzyme. This is NADH-ubiquinone oxidoreductase 49 kDa subunit (NAD7) from Paramecium tetraurelia.